The sequence spans 66 residues: UPF0337 protein spyM18_1212 (66 aa).

It belongs to the UPF0337 (CsbD) family.

This chain is UPF0337 protein spyM18_1212, found in Streptococcus pyogenes serotype M18 (strain MGAS8232).